We begin with the raw amino-acid sequence, 197 residues long: Segregation and condensation protein B (197 aa).

This sequence belongs to the ScpB family. Homodimer. Homodimerization may be required to stabilize the binding of ScpA to the Smc head domains. Component of a cohesin-like complex composed of ScpA, ScpB and the Smc homodimer, in which ScpA and ScpB bind to the head domain of Smc. The presence of the three proteins is required for the association of the complex with DNA.

Its subcellular location is the cytoplasm. Its function is as follows. Participates in chromosomal partition during cell division. May act via the formation of a condensin-like complex containing Smc and ScpA that pull DNA away from mid-cell into both cell halves. This chain is Segregation and condensation protein B, found in Malacoplasma penetrans (strain HF-2) (Mycoplasma penetrans).